A 191-amino-acid polypeptide reads, in one-letter code: Fe/S biogenesis protein NfuA (191 aa).

Residues Cys-149 and Cys-152 each contribute to the [4Fe-4S] cluster site.

Belongs to the NfuA family. In terms of assembly, homodimer. [4Fe-4S] cluster is required as a cofactor.

Functionally, involved in iron-sulfur cluster biogenesis. Binds a 4Fe-4S cluster, can transfer this cluster to apoproteins, and thereby intervenes in the maturation of Fe/S proteins. Could also act as a scaffold/chaperone for damaged Fe/S proteins. In Yersinia pseudotuberculosis serotype O:1b (strain IP 31758), this protein is Fe/S biogenesis protein NfuA.